Consider the following 185-residue polypeptide: Ribosome-recycling factor (185 aa).

It belongs to the RRF family.

Its subcellular location is the cytoplasm. Its function is as follows. Responsible for the release of ribosomes from messenger RNA at the termination of protein biosynthesis. May increase the efficiency of translation by recycling ribosomes from one round of translation to another. The polypeptide is Ribosome-recycling factor (Pseudomonas putida (strain W619)).